A 335-amino-acid chain; its full sequence is Nucleoid-associated protein KPN78578_25800 (335 aa).

This sequence belongs to the YejK family.

It is found in the cytoplasm. It localises to the nucleoid. The protein is Nucleoid-associated protein KPN78578_25800 of Klebsiella pneumoniae subsp. pneumoniae (strain ATCC 700721 / MGH 78578).